We begin with the raw amino-acid sequence, 468 residues long: Mitochondrial distribution and morphology protein 10 (468 aa).

This sequence belongs to the MDM10 family. Component of the ER-mitochondria encounter structure (ERMES) or MDM complex, composed of MMM1, MDM10, MDM12 and MDM34. Associates with the mitochondrial outer membrane sorting assembly machinery SAM(core) complex.

The protein resides in the mitochondrion outer membrane. Functionally, component of the ERMES/MDM complex, which serves as a molecular tether to connect the endoplasmic reticulum and mitochondria. Components of this complex are involved in the control of mitochondrial shape and protein biogenesis and may function in phospholipid exchange. MDM10 is involved in the late assembly steps of the general translocase of the mitochondrial outer membrane (TOM complex). Functions in the TOM40-specific route of the assembly of outer membrane beta-barrel proteins, including the association of TOM40 with the receptor TOM22 and small TOM proteins. Can associate with the SAM(core) complex as well as the MDM12-MMM1 complex, both involved in late steps of the major beta-barrel assembly pathway, that is responsible for biogenesis of all outer membrane beta-barrel proteins. May act as a switch that shuttles between both complexes and channels precursor proteins into the TOM40-specific pathway. Plays a role in mitochondrial morphology and in the inheritance of mitochondria. The chain is Mitochondrial distribution and morphology protein 10 from Blastomyces gilchristii (strain SLH14081) (Blastomyces dermatitidis).